The following is a 238-amino-acid chain: Phosphoribosylaminoimidazole-succinocarboxamide synthase (238 aa).

The protein belongs to the SAICAR synthetase family.

It catalyses the reaction 5-amino-1-(5-phospho-D-ribosyl)imidazole-4-carboxylate + L-aspartate + ATP = (2S)-2-[5-amino-1-(5-phospho-beta-D-ribosyl)imidazole-4-carboxamido]succinate + ADP + phosphate + 2 H(+). Its pathway is purine metabolism; IMP biosynthesis via de novo pathway; 5-amino-1-(5-phospho-D-ribosyl)imidazole-4-carboxamide from 5-amino-1-(5-phospho-D-ribosyl)imidazole-4-carboxylate: step 1/2. In Persephonella marina (strain DSM 14350 / EX-H1), this protein is Phosphoribosylaminoimidazole-succinocarboxamide synthase.